Reading from the N-terminus, the 619-residue chain is Dihydroxy-acid dehydratase (619 aa).

Aspartate 81 contacts Mg(2+). Cysteine 122 is a binding site for [2Fe-2S] cluster. Mg(2+)-binding residues include aspartate 123 and lysine 124. Residue lysine 124 is modified to N6-carboxylysine. [2Fe-2S] cluster is bound at residue cysteine 195. A Mg(2+)-binding site is contributed by glutamate 494. Serine 520 serves as the catalytic Proton acceptor.

Belongs to the IlvD/Edd family. In terms of assembly, homodimer. The cofactor is [2Fe-2S] cluster. Requires Mg(2+) as cofactor.

The catalysed reaction is (2R)-2,3-dihydroxy-3-methylbutanoate = 3-methyl-2-oxobutanoate + H2O. The enzyme catalyses (2R,3R)-2,3-dihydroxy-3-methylpentanoate = (S)-3-methyl-2-oxopentanoate + H2O. It functions in the pathway amino-acid biosynthesis; L-isoleucine biosynthesis; L-isoleucine from 2-oxobutanoate: step 3/4. The protein operates within amino-acid biosynthesis; L-valine biosynthesis; L-valine from pyruvate: step 3/4. Functionally, functions in the biosynthesis of branched-chain amino acids. Catalyzes the dehydration of (2R,3R)-2,3-dihydroxy-3-methylpentanoate (2,3-dihydroxy-3-methylvalerate) into 2-oxo-3-methylpentanoate (2-oxo-3-methylvalerate) and of (2R)-2,3-dihydroxy-3-methylbutanoate (2,3-dihydroxyisovalerate) into 2-oxo-3-methylbutanoate (2-oxoisovalerate), the penultimate precursor to L-isoleucine and L-valine, respectively. The protein is Dihydroxy-acid dehydratase of Shewanella oneidensis (strain ATCC 700550 / JCM 31522 / CIP 106686 / LMG 19005 / NCIMB 14063 / MR-1).